The sequence spans 305 residues: Glycine betaine-binding protein YehZ (305 aa).

Residues 1–23 (MPLLKLWAGSLVMLAAVSLPLQA) form the signal peptide.

Belongs to the OsmX family. The complex is composed of two ATP-binding proteins (YehX), two transmembrane proteins (YehW and YehY) and a solute-binding protein (YehZ).

It is found in the periplasm. Part of an ABC transporter complex involved in low-affinity glycine betaine uptake. Binds glycine betaine with low affinity. The protein is Glycine betaine-binding protein YehZ (yehZ) of Escherichia coli (strain K12).